The chain runs to 1122 residues: TSET complex member tstF (1122 aa).

Residues 88–126 (SSSASGINGTNNNNSGSNSSNNNNNNNGSLSNSPNNNNN) show a composition bias toward low complexity. Disordered regions lie at residues 88-131 (SSSA…AFIG) and 178-215 (QTLH…STNS). A compositionally biased stretch (polar residues) spans 178 to 190 (QTLHNRSPNNTIK). Over residues 191 to 215 (LSPNSSNNDSLNNNNNNINNNSTNS) the composition is skewed to low complexity. WD repeat units lie at residues 298–337 (FENK…IEKQ), 342–381 (PKGT…LATQ), and 383–422 (SKVH…EVSK). The tract at residues 731–775 (NGSVGGSSSNNSANSNNSNNNNNNNNNNSNNSNNNNNSSQPILEP) is disordered.

Component of the TSET complex, a heterohexamer composed of tstA, tstB, tstC, tstD, tstE and tstF, which may act in plasma membrane turnover. tstA, tstB, tstC and tstD are likely to be the core complex members with tstE and tstF acting as associated scaffold proteins.

The chain is TSET complex member tstF from Dictyostelium discoideum (Social amoeba).